We begin with the raw amino-acid sequence, 342 residues long: Prostasin (342 aa).

Positions methionine 1–arginine 29 are cleaved as a signal peptide. Positions alanine 30–glycine 32 are cleaved as a propeptide — activation peptide. 2 cysteine pairs are disulfide-bonded: cysteine 37–cysteine 154 and cysteine 70–cysteine 86. The region spanning isoleucine 45–alanine 286 is the Peptidase S1 domain. Residue histidine 85 is the Charge relay system of the active site. Asparagine 110 is a glycosylation site (N-linked (GlcNAc...) asparagine). The active-site Charge relay system is aspartate 134. Residue asparagine 159 is glycosylated (N-linked (GlcNAc...) asparagine). 3 disulfide bridges follow: cysteine 168–cysteine 244, cysteine 201–cysteine 223, and cysteine 234–cysteine 262. The active-site Charge relay system is the serine 238. The chain crosses the membrane as a helical span at residues leucine 320–leucine 340. Residues proline 323 to histidine 342 constitute a propeptide that is removed on maturation.

Belongs to the peptidase S1 family. In terms of assembly, heterodimer of two chains, light and heavy, held by a disulfide bond.

Its subcellular location is the cell membrane. The protein resides in the secreted. It localises to the extracellular space. Its function is as follows. Possesses a trypsin-like cleavage specificity with a preference for poly-basic substrates. Stimulates epithelial sodium channel (ENaC) activity through activating cleavage of the gamma subunits (SCNN1G). The sequence is that of Prostasin (Prss8) from Mus musculus (Mouse).